Here is a 320-residue protein sequence, read N- to C-terminus: NAD kinase (320 aa).

Residue aspartate 96 is the Proton acceptor of the active site. NAD(+) is bound by residues 96-97 (DG), arginine 101, 170-171 (NE), aspartate 200, and 211-216 (TAYAFS).

Belongs to the NAD kinase family. Requires a divalent metal cation as cofactor.

Its subcellular location is the cytoplasm. The enzyme catalyses NAD(+) + ATP = ADP + NADP(+) + H(+). Functionally, involved in the regulation of the intracellular balance of NAD and NADP, and is a key enzyme in the biosynthesis of NADP. Catalyzes specifically the phosphorylation on 2'-hydroxyl of the adenosine moiety of NAD to yield NADP. This chain is NAD kinase, found in Rhodococcus jostii (strain RHA1).